The primary structure comprises 527 residues: MGKYHSFVNVVALSLSLSGRVFGAIGPVTDLTISNADVTPDGITRAAVLAGGVFPGPLITGNKGDEFQINVIDNLTNETMLKSTTIHWHGIFQAGTNWADGAAFVNQCPIATGNSFLYDFTVPDQAGTFWYHSHLSTQYCDGLRGPLVVYDPDDPNASLYDVDDDTTVITLADWYHTAAKLGPAFPAGPDSVLINGLGRFSGDGGGATNLTVITVTQGKRYRFRLVSISCDPNFTFSIDGHNMTIIEVDGVNHEALDVDSIQIFAGQRYSFILNANQSIDNYWIRAIPNTGTTDTTGGVNSAILRYDTAEDIEPTTNATTSVIPLTETDLVPLDNPAAPGDPQVGGVDLAMSLDFSFNGSNFFINNETFVPPTVPVLLQILSGAQDAASLLPNGSVYTLPSNSTIEISFPIITTDGVLNAPGAPHPFHLHGHTFSVVRSAGSSTFNYANPVRRDTVSTGNSGDNVTIRFTTDNPGPWFLHCHIDFHLEAGFAIVWGEDTADTASANPVPTAWSDLCPTYDALDSSDL.

Residues 1 to 23 (MGKYHSFVNVVALSLSLSGRVFG) form the signal peptide. One can recognise a Plastocyanin-like 1 domain in the interval 25-150 (IGPVTDLTIS…DGLRGPLVVY (126 aa)). N-linked (GlcNAc...) asparagine glycans are attached at residues N74 and N77. The Cu cation site is built by H87, H89, H132, and H134. Intrachain disulfides connect C108–C516 and C140–C230. N-linked (GlcNAc...) asparagine glycosylation is found at N156, N209, N233, N242, N276, N317, N358, N366, N393, and N402. A Plastocyanin-like 2 domain is found at 162–306 (VDDDTTVITL…GGVNSAILRY (145 aa)). Residues 373–498 (TVPVLLQILS…AGFAIVWGED (126 aa)) enclose the Plastocyanin-like 3 domain. Residues H425, H428, H430, H480, C481, H482, and H486 each coordinate Cu cation.

The protein belongs to the multicopper oxidase family. As to quaternary structure, homodimer. Requires Cu cation as cofactor.

The protein localises to the secreted. The catalysed reaction is 4 hydroquinone + O2 = 4 benzosemiquinone + 2 H2O. Its function is as follows. Lignin degradation and detoxification of lignin-derived products. This Trametes villosa (White-rot fungus) protein is Laccase-5 (LCC5).